Here is a 280-residue protein sequence, read N- to C-terminus: Large ribosomal subunit protein uL2 (280 aa).

Disordered stretches follow at residues 27 to 58 and 226 to 280; these read STPEKSLVRPLHGHGGRNAHGRITTRHKGGGH and MNPV…KHGR. Composition is skewed to basic residues over residues 37–58 and 268–280; these read LHGHGGRNAHGRITTRHKGGGH and IVRRRRTGKKHGR.

This sequence belongs to the universal ribosomal protein uL2 family. Part of the 50S ribosomal subunit. Forms a bridge to the 30S subunit in the 70S ribosome.

Functionally, one of the primary rRNA binding proteins. Required for association of the 30S and 50S subunits to form the 70S ribosome, for tRNA binding and peptide bond formation. It has been suggested to have peptidyltransferase activity; this is somewhat controversial. Makes several contacts with the 16S rRNA in the 70S ribosome. This Mycobacterium marinum (strain ATCC BAA-535 / M) protein is Large ribosomal subunit protein uL2.